Here is an 813-residue protein sequence, read N- to C-terminus: Leucine--tRNA ligase (813 aa).

The 'HIGH' region motif lies at 41–51 (PYPSGTLHMGH). A 'KMSKS' region motif is present at residues 575–579 (KMSKS). Residue Lys-578 participates in ATP binding.

This sequence belongs to the class-I aminoacyl-tRNA synthetase family.

It localises to the cytoplasm. It carries out the reaction tRNA(Leu) + L-leucine + ATP = L-leucyl-tRNA(Leu) + AMP + diphosphate. The polypeptide is Leucine--tRNA ligase (Francisella tularensis subsp. tularensis (strain FSC 198)).